Reading from the N-terminus, the 251-residue chain is Small ribosomal subunit protein uS2 (251 aa).

Residues 232–251 (EAIAEMDEQVEEDAEEASND) are disordered.

It belongs to the universal ribosomal protein uS2 family.

This chain is Small ribosomal subunit protein uS2, found in Chlorobaculum parvum (strain DSM 263 / NCIMB 8327) (Chlorobium vibrioforme subsp. thiosulfatophilum).